The sequence spans 644 residues: Threonine--tRNA ligase (644 aa).

The region spanning 1-62 (MSFSITLPDG…DSDSEVAIIT (62 aa)) is the TGS domain. The catalytic stretch occupies residues 240-538 (DHRTIGRDLD…LTEIYKGAFP (299 aa)). 3 residues coordinate Zn(2+): C334, H385, and H515.

The protein belongs to the class-II aminoacyl-tRNA synthetase family. Homodimer. The cofactor is Zn(2+).

The protein localises to the cytoplasm. It catalyses the reaction tRNA(Thr) + L-threonine + ATP = L-threonyl-tRNA(Thr) + AMP + diphosphate + H(+). Its function is as follows. Catalyzes the attachment of threonine to tRNA(Thr) in a two-step reaction: L-threonine is first activated by ATP to form Thr-AMP and then transferred to the acceptor end of tRNA(Thr). Also edits incorrectly charged L-seryl-tRNA(Thr). In Lactobacillus helveticus (strain DPC 4571), this protein is Threonine--tRNA ligase.